The following is a 208-amino-acid chain: FMN-dependent NADH:quinone oxidoreductase (208 aa).

Residues 17-19, 99-102, and 143-146 each bind FMN; these read SNS, MWNL, and SRGG.

It belongs to the azoreductase type 1 family. Homodimer. The cofactor is FMN.

It carries out the reaction 2 a quinone + NADH + H(+) = 2 a 1,4-benzosemiquinone + NAD(+). The enzyme catalyses N,N-dimethyl-1,4-phenylenediamine + anthranilate + 2 NAD(+) = 2-(4-dimethylaminophenyl)diazenylbenzoate + 2 NADH + 2 H(+). In terms of biological role, quinone reductase that provides resistance to thiol-specific stress caused by electrophilic quinones. Also exhibits azoreductase activity. Catalyzes the reductive cleavage of the azo bond in aromatic azo compounds to the corresponding amines. The chain is FMN-dependent NADH:quinone oxidoreductase from Staphylococcus aureus (strain bovine RF122 / ET3-1).